Reading from the N-terminus, the 369-residue chain is Phosphatidylglycerol--prolipoprotein diacylglyceryl transferase (369 aa).

Helical transmembrane passes span 26–46, 60–80, and 97–117; these read YYGI…ILTL, YVFI…FIIG, and LAIQ…FFFI. Arg167 is an a 1,2-diacyl-sn-glycero-3-phospho-(1'-sn-glycerol) binding site. Helical transmembrane passes span 216 to 236 and 273 to 293; these read VPIF…IVFL and FVTS…GFIF.

This sequence belongs to the Lgt family.

It localises to the cell membrane. It catalyses the reaction L-cysteinyl-[prolipoprotein] + a 1,2-diacyl-sn-glycero-3-phospho-(1'-sn-glycerol) = an S-1,2-diacyl-sn-glyceryl-L-cysteinyl-[prolipoprotein] + sn-glycerol 1-phosphate + H(+). The protein operates within protein modification; lipoprotein biosynthesis (diacylglyceryl transfer). Functionally, catalyzes the transfer of the diacylglyceryl group from phosphatidylglycerol to the sulfhydryl group of the N-terminal cysteine of a prolipoprotein, the first step in the formation of mature lipoproteins. The polypeptide is Phosphatidylglycerol--prolipoprotein diacylglyceryl transferase (Mycoplasmoides gallisepticum (strain R(low / passage 15 / clone 2)) (Mycoplasma gallisepticum)).